The chain runs to 245 residues: Zinc finger protein AZF1 (245 aa).

Residues 1–15 show a composition bias toward polar residues; that stretch reads MALETLNSPTATTTA. 2 disordered regions span residues 1-57 and 112-141; these read MALE…NKNL and LGGH…SHSN. The segment at 97–119 adopts a C2H2-type 1 zinc-finger fold; that stretch reads YKCTVCGKSFSSYQALGGHKTSH. The span at 123-134 shows a compositional bias: polar residues; the sequence is TNTSITSGNQEL. The C2H2-type 2 zinc-finger motif lies at 164–186; it reads HTCSICFKSFASGQALGGHKRCH. The segment at 193–231 is disordered; sequence GNGNGSSSNSVELVAGSDVSDVDNERWSEESAIGGHRGF.

Highly expressed in roots and at lower levels in leaves and stems.

It localises to the nucleus. Its function is as follows. Transcriptional repressor involved in the inhibition of plant growth under abiotic stress conditions. Can repress the expression of various genes, including osmotic stress and abscisic acid-repressive genes and auxin-inducible genes, by binding to their promoter regions in a DNA sequence-specific manner. This chain is Zinc finger protein AZF1 (AZF1), found in Arabidopsis thaliana (Mouse-ear cress).